A 117-amino-acid chain; its full sequence is UPF0231 protein HI_1724 (117 aa).

The protein belongs to the UPF0231 family.

The protein is UPF0231 protein HI_1724 of Haemophilus influenzae (strain ATCC 51907 / DSM 11121 / KW20 / Rd).